The chain runs to 131 residues: Small ribosomal subunit protein uS11 (131 aa).

The protein belongs to the universal ribosomal protein uS11 family. Part of the 30S ribosomal subunit. Interacts with proteins S7 and S18. Binds to IF-3.

In terms of biological role, located on the platform of the 30S subunit, it bridges several disparate RNA helices of the 16S rRNA. Forms part of the Shine-Dalgarno cleft in the 70S ribosome. In Helicobacter pylori (strain ATCC 700392 / 26695) (Campylobacter pylori), this protein is Small ribosomal subunit protein uS11.